Consider the following 368-residue polypeptide: Cytochrome b (368 aa).

4 consecutive transmembrane segments (helical) span residues 25–45 (FGSM…FLAM), 69–90 (WIMQ…YIHI), 105–125 (WLSG…GYVL), and 170–190 (FFAL…IHII). Heme b contacts are provided by His75 and His89. Residues His174 and His188 each contribute to the heme b site. His193 contacts a ubiquinone. The next 4 membrane-spanning stretches (helical) occupy residues 218 to 238 (YKDM…MSFT), 280 to 300 (LGGT…PFTH), 312 to 332 (LTQT…WTAT), and 339 to 358 (FIFI…IINP).

It belongs to the cytochrome b family. In terms of assembly, the cytochrome bc1 complex contains 3 respiratory subunits (MT-CYB, CYC1 and UQCRFS1), 2 core proteins (UQCRC1 and UQCRC2) and probably 6 low-molecular weight proteins. Requires heme b as cofactor.

The protein localises to the mitochondrion inner membrane. Functionally, component of the ubiquinol-cytochrome c reductase complex (complex III or cytochrome b-c1 complex) that is part of the mitochondrial respiratory chain. The b-c1 complex mediates electron transfer from ubiquinol to cytochrome c. Contributes to the generation of a proton gradient across the mitochondrial membrane that is then used for ATP synthesis. This is Cytochrome b (MT-CYB) from Notechis ater (Black tiger snake).